A 416-amino-acid polypeptide reads, in one-letter code: 2,3-bisphosphoglycerate-independent phosphoglycerate mutase (416 aa).

The protein belongs to the BPG-independent phosphoglycerate mutase family. A-PGAM subfamily.

The enzyme catalyses (2R)-2-phosphoglycerate = (2R)-3-phosphoglycerate. Its pathway is carbohydrate degradation; glycolysis; pyruvate from D-glyceraldehyde 3-phosphate: step 3/5. Functionally, catalyzes the interconversion of 2-phosphoglycerate and 3-phosphoglycerate. This is 2,3-bisphosphoglycerate-independent phosphoglycerate mutase from Ignicoccus hospitalis (strain KIN4/I / DSM 18386 / JCM 14125).